A 150-amino-acid chain; its full sequence is UPF0756 membrane protein Asuc_1151 (150 aa).

4 helical membrane-spanning segments follow: residues 1 to 21 (MSLH…LGVL), 52 to 72 (YGLN…IVAG), 82 to 102 (LLHW…WLAG), and 123 to 143 (ILGV…AGIL).

It belongs to the UPF0756 family.

It localises to the cell membrane. This is UPF0756 membrane protein Asuc_1151 from Actinobacillus succinogenes (strain ATCC 55618 / DSM 22257 / CCUG 43843 / 130Z).